Consider the following 575-residue polypeptide: CCR4-NOT transcription complex subunit 4 (575 aa).

The segment at 14–57 (CPLCMEPLEIDDINFFPCTCGYQICRFCWHRIRTDENGLCPACR) adopts an RING-type; degenerate zinc-finger fold. Positions 68-104 (KPLSQEELQRIKNEKKQKQNERKQKISENRKHLASVR) form a coiled coil. Residue S71 is modified to Phosphoserine. Positions 109–189 (NLVFVVGLSQ…VVDGRTLKAS (81 aa)) constitute an RRM domain. The C3H1-type zinc finger occupies 190 to 217 (LGTTKYCSYFLKNMQCPKPDCMYLHELG). Disordered stretches follow at residues 256-372 (TGSV…EPQS) and 424-458 (SVQDQPSLSPTSLQNSSSHTTTAKGPGSGFLHPAA). The segment covering 281 to 299 (DSLSIGNGDNSQQISNSDT) has biased composition (polar residues). S301 carries the post-translational modification Phosphoserine. A compositionally biased stretch (polar residues) spans 307–322 (SKSNPVIPISSSNHSA). S324 is subject to Phosphoserine. Over residues 345–356 (NPIPSGLPPFPS) the composition is skewed to pro residues. Residues 428–441 (QPSLSPTSLQNSSS) are compositionally biased toward low complexity. Position 432 is a phosphoserine (S432). R475 and R483 each carry asymmetric dimethylarginine. At S490 the chain carries Phosphoserine. The residue at position 497 (R497) is an Asymmetric dimethylarginine. Residues 553–575 (PLSTSSHSLQQGQQPTSLHTTVA) form a disordered region.

In terms of assembly, interacts with CNOT1 via its C-terminus but does not stably associate with the CCR4-NOT complex. Interacts (via RING domain) with UBE2D2. Interacts with ABCE1, PINK1 and PELO. In terms of processing, autoubiquitinated.

It localises to the cytoplasm. The protein resides in the nucleus. The catalysed reaction is S-ubiquitinyl-[E2 ubiquitin-conjugating enzyme]-L-cysteine + [acceptor protein]-L-lysine = [E2 ubiquitin-conjugating enzyme]-L-cysteine + N(6)-ubiquitinyl-[acceptor protein]-L-lysine.. The protein operates within protein modification; protein ubiquitination. Functionally, has E3 ubiquitin ligase activity, promoting ubiquitination and degradation of target proteins. Involved in activation of the JAK/STAT pathway. Catalyzes ubiquitination of methylated RBM15. Plays a role in quality control of translation of mitochondrial outer membrane-localized mRNA. As part of the PINK1-regulated signaling, upon mitochondria damage, ubiquitinates ABCE1 and thereby recruits autophagy receptors to the mitochondrial outer membrane to initiate mitophagy. The sequence is that of CCR4-NOT transcription complex subunit 4 (CNOT4) from Homo sapiens (Human).